Here is a 273-residue protein sequence, read N- to C-terminus: HUWE1-associated protein modifying stress responses 2 (273 aa).

3 disordered regions span residues 146–181 (GKVP…SSSV), 204–230 (ISMR…FLED), and 251–273 (KRTS…NRMV). Positions 149–165 (PPAPPPPRTPRTPPKPP) are enriched in pro residues. 3 stretches are compositionally biased toward polar residues: residues 170–181 (SQAVATESSSSV), 208–218 (SGDSPQDSGVA), and 254–267 (SAQC…SPIQ). The tract at residues 249 to 273 (IRKRTSAQCSDGITDSPIQKRNRMV) is nuclear localization signal.

This sequence belongs to the HAPSTR1 family. As to quaternary structure, homooligomer. Heterooligomer with HAPSTR1; the interaction is direct and stabilizes HAPSTR1 independently of HUWE1. Interacts with HUWE1. As to expression, expressed in a tissue-restricted manner compared to HAPSTR1.

The protein resides in the nucleus. Together with HAPSTR1 plays a central regulatory role in the cellular response to molecular stressors, such as DNA damage, nutrient scarcity, and protein misfolding. Regulates these multiple stress response signaling pathways by stabilizing HAPSTR1, but also independently of HAPSTR1. In Homo sapiens (Human), this protein is HUWE1-associated protein modifying stress responses 2.